We begin with the raw amino-acid sequence, 378 residues long: Chaperone protein DnaJ (378 aa).

The region spanning Asp5–Gly70 is the J domain. The CR-type zinc-finger motif lies at Gly137 to Ser215. The Zn(2+) site is built by Cys150, Cys153, Cys167, Cys170, Cys189, Cys192, Cys203, and Cys206. 4 CXXCXGXG motif repeats span residues Cys150–Gly157, Cys167–Gly174, Cys189–Gly196, and Cys203–Gly210.

Belongs to the DnaJ family. As to quaternary structure, homodimer. It depends on Zn(2+) as a cofactor.

The protein resides in the cytoplasm. Functionally, participates actively in the response to hyperosmotic and heat shock by preventing the aggregation of stress-denatured proteins and by disaggregating proteins, also in an autonomous, DnaK-independent fashion. Unfolded proteins bind initially to DnaJ; upon interaction with the DnaJ-bound protein, DnaK hydrolyzes its bound ATP, resulting in the formation of a stable complex. GrpE releases ADP from DnaK; ATP binding to DnaK triggers the release of the substrate protein, thus completing the reaction cycle. Several rounds of ATP-dependent interactions between DnaJ, DnaK and GrpE are required for fully efficient folding. Also involved, together with DnaK and GrpE, in the DNA replication of plasmids through activation of initiation proteins. In Psychrobacter cryohalolentis (strain ATCC BAA-1226 / DSM 17306 / VKM B-2378 / K5), this protein is Chaperone protein DnaJ.